Reading from the N-terminus, the 716-residue chain is Fatty acid oxidation complex subunit alpha (716 aa).

An enoyl-CoA hydratase/isomerase region spans residues 1 to 189; it reads MIYQSPTIQV…KVGAVDAVVA (189 aa). D296 is a substrate binding site. Residues 311–716 are 3-hydroxyacyl-CoA dehydrogenase; that stretch reads KAVNSAAVLG…AANNGSYYQA (406 aa). NAD(+) is bound by residues M324, D343, 400-402, K407, and S429; that span reads VVE. H450 functions as the For 3-hydroxyacyl-CoA dehydrogenase activity in the catalytic mechanism. N453 contacts NAD(+). Residues N500 and Y660 each contribute to the substrate site.

In the N-terminal section; belongs to the enoyl-CoA hydratase/isomerase family. The protein in the C-terminal section; belongs to the 3-hydroxyacyl-CoA dehydrogenase family. Heterotetramer of two alpha chains (FadB) and two beta chains (FadA).

The catalysed reaction is a (3S)-3-hydroxyacyl-CoA + NAD(+) = a 3-oxoacyl-CoA + NADH + H(+). It carries out the reaction a (3S)-3-hydroxyacyl-CoA = a (2E)-enoyl-CoA + H2O. The enzyme catalyses a 4-saturated-(3S)-3-hydroxyacyl-CoA = a (3E)-enoyl-CoA + H2O. It catalyses the reaction (3S)-3-hydroxybutanoyl-CoA = (3R)-3-hydroxybutanoyl-CoA. The catalysed reaction is a (3Z)-enoyl-CoA = a 4-saturated (2E)-enoyl-CoA. It carries out the reaction a (3E)-enoyl-CoA = a 4-saturated (2E)-enoyl-CoA. Its pathway is lipid metabolism; fatty acid beta-oxidation. Involved in the aerobic and anaerobic degradation of long-chain fatty acids via beta-oxidation cycle. Catalyzes the formation of 3-oxoacyl-CoA from enoyl-CoA via L-3-hydroxyacyl-CoA. It can also use D-3-hydroxyacyl-CoA and cis-3-enoyl-CoA as substrate. The sequence is that of Fatty acid oxidation complex subunit alpha from Shewanella oneidensis (strain ATCC 700550 / JCM 31522 / CIP 106686 / LMG 19005 / NCIMB 14063 / MR-1).